We begin with the raw amino-acid sequence, 507 residues long: Phytoene dehydrogenase (507 aa).

Residue 12–45 (VVVGAGLAGLAAALHLLGAGRRVTVVEREDVPGG) coordinates FAD.

It belongs to the carotenoid/retinoid oxidoreductase family. The cofactor is FAD.

It functions in the pathway carotenoid biosynthesis; lycopene biosynthesis. Functionally, this enzyme converts phytoene into zeta-carotene via the intermediary of phytofluene by the symmetrical introduction of two double bonds at the C-11 and C-11' positions of phytoene. The chain is Phytoene dehydrogenase (crtI) from Streptomyces griseus.